Reading from the N-terminus, the 426-residue chain is Serine--tRNA ligase (426 aa).

233 to 235 contacts L-serine; the sequence is TAE. 264 to 266 is a binding site for ATP; the sequence is RSE. Residue Glu287 coordinates L-serine. 351-354 is a binding site for ATP; that stretch reads EISS. Ser387 is an L-serine binding site.

The protein belongs to the class-II aminoacyl-tRNA synthetase family. Type-1 seryl-tRNA synthetase subfamily. In terms of assembly, homodimer. The tRNA molecule binds across the dimer.

Its subcellular location is the cytoplasm. The enzyme catalyses tRNA(Ser) + L-serine + ATP = L-seryl-tRNA(Ser) + AMP + diphosphate + H(+). It carries out the reaction tRNA(Sec) + L-serine + ATP = L-seryl-tRNA(Sec) + AMP + diphosphate + H(+). The protein operates within aminoacyl-tRNA biosynthesis; selenocysteinyl-tRNA(Sec) biosynthesis; L-seryl-tRNA(Sec) from L-serine and tRNA(Sec): step 1/1. Its function is as follows. Catalyzes the attachment of serine to tRNA(Ser). Is also able to aminoacylate tRNA(Sec) with serine, to form the misacylated tRNA L-seryl-tRNA(Sec), which will be further converted into selenocysteinyl-tRNA(Sec). This Pseudomonas paraeruginosa (strain DSM 24068 / PA7) (Pseudomonas aeruginosa (strain PA7)) protein is Serine--tRNA ligase.